The following is a 411-amino-acid chain: Creatinase (411 aa).

His-240 is an active-site residue.

It belongs to the peptidase M24 family. Creatinase subfamily. Homodimer.

It catalyses the reaction creatine + H2O = sarcosine + urea. This chain is Creatinase, found in Bacillus sp. (strain B-0618).